Reading from the N-terminus, the 457-residue chain is MLSSQSPSIYTVSRLNQSVRLLLEQEMGQVWISGEISNFTQPSSGHWYFTLKDDNAQVRCAMFRNSNRRVTFRPQHGQQVLVRANITLYEPRGDYQIIVESMQPAGEGLLQQKYEQLKAKLSAEGLFDQQFKKPLPSPAHCVGVITSKTGAALHDILHVLKRRDPSLPVIIYPTAVQGDDAPGQIVRAIELANARHECDVLIVGRGGGSLEDLWSFNDERVARAIFASQIPVVSAVGHETDVTIADFVSDMRAPTPSAAAEVVSRNQQELLRQMQNGQQRLEMAMDYFLANRTRRFTQLHHRLQQQHPQLRLERQQTVLERLRQRMNFALDNQLKRVVSHQQRMTQRLNQQNPQPKIYRTQTRIQQLEYRLAENLRARLSTTRERFGNAVTHLEAVSPLSTLARGYSVTTATDGKVLKQTKQVKAGDLMTTRLADGWVESEVKGITPAKKTRKKKPV.

This sequence belongs to the XseA family. As to quaternary structure, heterooligomer composed of large and small subunits.

Its subcellular location is the cytoplasm. It carries out the reaction Exonucleolytic cleavage in either 5'- to 3'- or 3'- to 5'-direction to yield nucleoside 5'-phosphates.. In terms of biological role, bidirectionally degrades single-stranded DNA into large acid-insoluble oligonucleotides, which are then degraded further into small acid-soluble oligonucleotides. The chain is Exodeoxyribonuclease 7 large subunit from Enterobacter sp. (strain 638).